The following is a 109-amino-acid chain: uncharacterized protein (109 aa).

Residues 36–109 (NSSNNLNNNN…KKKKKKRRVK (74 aa)) form a disordered region. Low complexity predominate over residues 39–88 (NNLNNNNFNENNLKNNNNRNGNNNNNNNNNNNNNNNNNNNNNNNNNNNNN). Over residues 99 to 109 (QKKKKKKRRVK) the composition is skewed to basic residues.

This is an uncharacterized protein from Dictyostelium discoideum (Social amoeba).